The primary structure comprises 167 residues: MAMETCFRAWALHAPAGSKDRLLVGNLVLPSKRALAPLSVGRVATRRPRHVCQSKNAVDEVVVADEKNWDGLVMACETPVLVEFWAPWCGPCRMIAPVIDELAKDYAGKITCCKVNTDDSPNVASTYGIRSIPTVLIFKGGEKKESVIGAVPKSTLTTLIDKYIGSS.

A chloroplast-targeting transit peptide spans 1-53 (MAMETCFRAWALHAPAGSKDRLLVGNLVLPSKRALAPLSVGRVATRRPRHVCQ). Residues 54 to 165 (SKNAVDEVVV…LTTLIDKYIG (112 aa)) enclose the Thioredoxin domain. A disulfide bridge links Cys-89 with Cys-92.

This sequence belongs to the thioredoxin family. Plant M-type subfamily. As to quaternary structure, forms a complex with heterodimeric ferredoxin-thioredoxin reductase (FTR) and ferredoxin.

Its subcellular location is the plastid. It localises to the chloroplast. In terms of biological role, participates in various redox reactions through the reversible oxidation of the active center dithiol to a disulfide. The M form is known to activate NADP-malate dehydrogenase. This chain is Thioredoxin M-type, chloroplastic (TRM1), found in Zea mays (Maize).